The chain runs to 132 residues: ATP synthase epsilon chain (132 aa).

This sequence belongs to the ATPase epsilon chain family. As to quaternary structure, F-type ATPases have 2 components, CF(1) - the catalytic core - and CF(0) - the membrane proton channel. CF(1) has five subunits: alpha(3), beta(3), gamma(1), delta(1), epsilon(1). CF(0) has three main subunits: a, b and c.

The protein resides in the cell membrane. Produces ATP from ADP in the presence of a proton gradient across the membrane. This Bacillus sp. (strain PS3) protein is ATP synthase epsilon chain (atpC).